Here is a 68-residue protein sequence, read N- to C-terminus: Inhibitor of trypsin and hageman factor (68 aa).

Ser1 carries the N-acetylserine modification. Cys3 and Cys48 are joined by a disulfide.

This sequence belongs to the protease inhibitor I13 (potato type I serine protease inhibitor) family.

Specifically inhibits both trypsin and activated Hageman factor. The protein is Inhibitor of trypsin and hageman factor of Cucurbita maxima (Pumpkin).